A 617-amino-acid polypeptide reads, in one-letter code: Probable Xaa-Pro aminopeptidase P (617 aa).

Mn(2+)-binding residues include Asp414, Asp425, Glu523, and Glu537.

This sequence belongs to the peptidase M24B family. Mn(2+) serves as cofactor.

The enzyme catalyses Release of any N-terminal amino acid, including proline, that is linked to proline, even from a dipeptide or tripeptide.. Catalyzes the removal of a penultimate prolyl residue from the N-termini of peptides. This chain is Probable Xaa-Pro aminopeptidase P (AMPP), found in Ajellomyces capsulatus (strain G186AR / H82 / ATCC MYA-2454 / RMSCC 2432) (Darling's disease fungus).